The primary structure comprises 229 residues: DNA repair protein RecO (229 aa).

This sequence belongs to the RecO family.

Functionally, involved in DNA repair and RecF pathway recombination. The protein is DNA repair protein RecO of Pseudomonas fluorescens (strain ATCC BAA-477 / NRRL B-23932 / Pf-5).